A 123-amino-acid polypeptide reads, in one-letter code: UPF0426 protein At1g28150, chloroplastic (123 aa).

A chloroplast-targeting transit peptide spans 1 to 26 (MGFVLICTCPPSSGVVVSQLHHHQFS). Residues 97-123 (SGITEEEVDADGVVSNDEDSPQQIEIE) form a disordered region. Residues 100–123 (TEEEVDADGVVSNDEDSPQQIEIE) are compositionally biased toward acidic residues.

The protein belongs to the UPF0426 family.

It is found in the plastid. It localises to the chloroplast. The protein resides in the plastoglobule. The sequence is that of UPF0426 protein At1g28150, chloroplastic from Arabidopsis thaliana (Mouse-ear cress).